A 105-amino-acid chain; its full sequence is UPF0235 protein A1C_06510 (105 aa).

This sequence belongs to the UPF0235 family.

This Rickettsia akari (strain Hartford) protein is UPF0235 protein A1C_06510.